Reading from the N-terminus, the 115-residue chain is Large ribosomal subunit protein bL20 (115 aa).

This sequence belongs to the bacterial ribosomal protein bL20 family.

In terms of biological role, binds directly to 23S ribosomal RNA and is necessary for the in vitro assembly process of the 50S ribosomal subunit. It is not involved in the protein synthesizing functions of that subunit. The chain is Large ribosomal subunit protein bL20 from Chlorobium phaeobacteroides (strain DSM 266 / SMG 266 / 2430).